We begin with the raw amino-acid sequence, 229 residues long: Enolase-phosphatase E1 (229 aa).

Polar residues predominate over residues 208 to 218; it reads DTQSTHRQVSS. Positions 208-229 are disordered; the sequence is DTQSTHRQVSSFDDIHPEQIPT. A compositionally biased stretch (basic and acidic residues) spans 220–229; it reads DDIHPEQIPT.

Belongs to the HAD-like hydrolase superfamily. MasA/MtnC family. In terms of assembly, monomer. It depends on Mg(2+) as a cofactor.

The catalysed reaction is 5-methylsulfanyl-2,3-dioxopentyl phosphate + H2O = 1,2-dihydroxy-5-(methylsulfanyl)pent-1-en-3-one + phosphate. The protein operates within amino-acid biosynthesis; L-methionine biosynthesis via salvage pathway; L-methionine from S-methyl-5-thio-alpha-D-ribose 1-phosphate: step 3/6. It participates in amino-acid biosynthesis; L-methionine biosynthesis via salvage pathway; L-methionine from S-methyl-5-thio-alpha-D-ribose 1-phosphate: step 4/6. In terms of biological role, bifunctional enzyme that catalyzes the enolization of 2,3-diketo-5-methylthiopentyl-1-phosphate (DK-MTP-1-P) into the intermediate 2-hydroxy-3-keto-5-methylthiopentenyl-1-phosphate (HK-MTPenyl-1-P), which is then dephosphorylated to form the acireductone 1,2-dihydroxy-3-keto-5-methylthiopentene (DHK-MTPene). The polypeptide is Enolase-phosphatase E1 (Cronobacter sakazakii (strain ATCC BAA-894) (Enterobacter sakazakii)).